Here is a 364-residue protein sequence, read N- to C-terminus: Dual-specificity RNA methyltransferase RlmN (364 aa).

Glu-91 (proton acceptor) is an active-site residue. The Radical SAM core domain occupies 102–337 (GTLRITQCLS…AIIRKSKGQD (236 aa)). Cys-109 and Cys-342 are joined by a disulfide. [4Fe-4S] cluster-binding residues include Cys-116, Cys-120, and Cys-123. S-adenosyl-L-methionine contacts are provided by residues 169–170 (GE), Ser-201, 223–225 (SLH), and Asn-299. The S-methylcysteine intermediate role is filled by Cys-342.

Belongs to the radical SAM superfamily. RlmN family. [4Fe-4S] cluster serves as cofactor.

It localises to the cytoplasm. The enzyme catalyses adenosine(2503) in 23S rRNA + 2 reduced [2Fe-2S]-[ferredoxin] + 2 S-adenosyl-L-methionine = 2-methyladenosine(2503) in 23S rRNA + 5'-deoxyadenosine + L-methionine + 2 oxidized [2Fe-2S]-[ferredoxin] + S-adenosyl-L-homocysteine. The catalysed reaction is adenosine(37) in tRNA + 2 reduced [2Fe-2S]-[ferredoxin] + 2 S-adenosyl-L-methionine = 2-methyladenosine(37) in tRNA + 5'-deoxyadenosine + L-methionine + 2 oxidized [2Fe-2S]-[ferredoxin] + S-adenosyl-L-homocysteine. In terms of biological role, specifically methylates position 2 of adenine 2503 in 23S rRNA and position 2 of adenine 37 in tRNAs. m2A2503 modification seems to play a crucial role in the proofreading step occurring at the peptidyl transferase center and thus would serve to optimize ribosomal fidelity. The protein is Dual-specificity RNA methyltransferase RlmN of Nitratidesulfovibrio vulgaris (strain ATCC 29579 / DSM 644 / CCUG 34227 / NCIMB 8303 / VKM B-1760 / Hildenborough) (Desulfovibrio vulgaris).